The primary structure comprises 41 residues: Photosystem I reaction center subunit IX (41 aa).

Residues 7 to 27 traverse the membrane as a helical segment; that stretch reads YLSTAPVLLTIWLTFTAGFII.

The protein belongs to the PsaJ family.

It localises to the plastid. The protein resides in the chloroplast thylakoid membrane. Its function is as follows. May help in the organization of the PsaE and PsaF subunits. The chain is Photosystem I reaction center subunit IX from Phaeodactylum tricornutum (strain CCAP 1055/1).